Reading from the N-terminus, the 270-residue chain is uncharacterized protein (270 aa).

The N-terminal stretch at 1-22 (MEYIKKLLCTMSVLLLIIFIGG) is a signal peptide. The N-palmitoyl cysteine moiety is linked to residue cysteine 23. Cysteine 23 is lipidated: S-diacylglycerol cysteine.

The protein belongs to the staphylococcal tandem lipoprotein family.

It localises to the cell membrane. This is an uncharacterized protein from Staphylococcus aureus (strain bovine RF122 / ET3-1).